We begin with the raw amino-acid sequence, 125 residues long: Putative iron-sulfur cluster insertion protein ErpA 2 (125 aa).

Positions 53, 117, and 119 each coordinate iron-sulfur cluster.

This sequence belongs to the HesB/IscA family. In terms of assembly, homodimer. Iron-sulfur cluster serves as cofactor.

In terms of biological role, required for insertion of 4Fe-4S clusters. The sequence is that of Putative iron-sulfur cluster insertion protein ErpA 2 from Polaromonas naphthalenivorans (strain CJ2).